The following is a 161-amino-acid chain: Glutaredoxin-2, mitochondrial (161 aa).

Residues 1–19 (MLWRRAALAGTRLVWSRSG) constitute a mitochondrion transit peptide. At Ser20 the chain carries Phosphoserine. One can recognise a Glutaredoxin domain in the interval 54 to 154 (VNQIQETISD…PLVHQCYLKK (101 aa)). Position 65 (Cys65) interacts with [2Fe-2S] cluster. Position 71 (Lys71) interacts with glutathione. Residue Cys74 is modified to S-glutathionyl cysteine; alternate. A disulfide bridge links Cys74 with Cys77. Residues Gln106 and Val118 each coordinate glutathione. Position 150 (Cys150) interacts with [2Fe-2S] cluster.

It belongs to the glutaredoxin family. Monomer; active form. Homodimer; inactive form. The homodimer is probably linked by 1 2Fe-2S cluster.

It localises to the mitochondrion. With respect to regulation, the 2Fe-2S present in the homodimer leads to inactivation of the enzyme. The 2Fe-2S may serve as a redox sensor: the presence of one-electron oxidants or reductants leading to the loss of the 2Fe-2S cluster, subsequent monomerization and activation of the enzyme. Its function is as follows. Glutathione-dependent oxidoreductase that facilitates the maintenance of mitochondrial redox homeostasis upon induction of apoptosis by oxidative stress. Involved in response to hydrogen peroxide and regulation of apoptosis caused by oxidative stress. Acts as a very efficient catalyst of monothiol reactions because of its high affinity for protein glutathione-mixed disulfides. Can receive electrons not only from glutathione (GSH), but also from thioredoxin reductase supporting both monothiol and dithiol reactions. Efficiently catalyzes both glutathionylation and deglutathionylation of mitochondrial complex I, which in turn regulates the superoxide production by the complex. Overexpression decreases the susceptibility to apoptosis and prevents loss of cardiolipin and cytochrome c release. The chain is Glutaredoxin-2, mitochondrial (GLRX2) from Pongo abelii (Sumatran orangutan).